A 78-amino-acid chain; its full sequence is Protein SlyX homolog (78 aa).

Belongs to the SlyX family.

This Xanthomonas campestris pv. campestris (strain 8004) protein is Protein SlyX homolog.